The following is a 174-amino-acid chain: Late lactation protein B (174 aa).

Positions 1 to 18 are cleaved as a signal peptide; sequence MKVLFLTIALSLFSILQA. Residues cysteine 77 and cysteine 169 are joined by a disulfide bond.

This sequence belongs to the calycin superfamily. Lipocalin family. Mammary gland specific. Secreted in milk.

The protein resides in the secreted. Functionally, probably serves a role in the transport of a small ligand released during the hydrolysis of milk fat. This is Late lactation protein B (LLPB) from Notamacropus eugenii (Tammar wallaby).